Consider the following 487-residue polypeptide: GTPase Der (487 aa).

The EngA-type G 1 domain maps to 2–166 (LKIAILGRPN…RIKLVANLPE (165 aa)). Residues 8-15 (GRPNVGKS), 55-59 (DTGGV), and 118-121 (NKAD) each bind GTP. Positions 165-194 (PEPREEEEEGLEELSVDEHEESEAALPSNT) are disordered. The span at 168–187 (REEEEEGLEELSVDEHEESE) shows a compositional bias: acidic residues. The 174-residue stretch at 225–398 (LKIALIGRPN…AIDELHHVVS (174 aa)) folds into the EngA-type G 2 domain. Residues 231-238 (GRPNVGKS), 278-282 (DTAGL), and 343-346 (NKWD) each bind GTP. Residues 399-483 (NKVPTPIVNK…PFDLEFKEKP (85 aa)) form the KH-like domain.

This sequence belongs to the TRAFAC class TrmE-Era-EngA-EngB-Septin-like GTPase superfamily. EngA (Der) GTPase family. Associates with the 50S ribosomal subunit.

Functionally, GTPase that plays an essential role in the late steps of ribosome biogenesis. The chain is GTPase Der from Chlamydia pneumoniae (Chlamydophila pneumoniae).